The following is a 348-amino-acid chain: 4-hydroxyphenylpyruvate dioxygenase (348 aa).

VOC domains are found at residues 11-141 (GFAF…ITSS) and 151-303 (AIDH…IFTE). 3 residues coordinate Fe cation: histidine 154, histidine 232, and glutamate 312.

It belongs to the 4HPPD family. The cofactor is Fe cation.

It carries out the reaction 3-(4-hydroxyphenyl)pyruvate + O2 = homogentisate + CO2. In terms of biological role, catalyzes the transformation of p-hydroxyphenylpyruvate into HGA. Has hemolytic and brown pigment production activity. This is 4-hydroxyphenylpyruvate dioxygenase (lly) from Legionella pneumophila (strain Corby).